A 390-amino-acid polypeptide reads, in one-letter code: DNA polymerase IV (390 aa).

Residues 6 to 187 (VMHVDLDAFF…LDIAVMPGIG (182 aa)) enclose the UmuC domain. Positions 10 and 105 each coordinate Mg(2+). The active site involves Glu106.

The protein belongs to the DNA polymerase type-Y family. In terms of assembly, monomer. The cofactor is Mg(2+).

It is found in the cytoplasm. The catalysed reaction is DNA(n) + a 2'-deoxyribonucleoside 5'-triphosphate = DNA(n+1) + diphosphate. Functionally, poorly processive, error-prone DNA polymerase involved in untargeted mutagenesis. Copies undamaged DNA at stalled replication forks, which arise in vivo from mismatched or misaligned primer ends. These misaligned primers can be extended by PolIV. Exhibits no 3'-5' exonuclease (proofreading) activity. May be involved in translesional synthesis, in conjunction with the beta clamp from PolIII. In Dehalococcoides mccartyi (strain ATCC BAA-2100 / JCM 16839 / KCTC 5957 / BAV1), this protein is DNA polymerase IV.